The sequence spans 467 residues: Methylenetetrahydrofolate--tRNA-(uracil-5-)-methyltransferase TrmFO (467 aa).

Residue 11 to 16 coordinates FAD; that stretch reads GAGLAG.

The protein belongs to the MnmG family. TrmFO subfamily. The cofactor is FAD.

The protein resides in the cytoplasm. The catalysed reaction is uridine(54) in tRNA + (6R)-5,10-methylene-5,6,7,8-tetrahydrofolate + NADH + H(+) = 5-methyluridine(54) in tRNA + (6S)-5,6,7,8-tetrahydrofolate + NAD(+). It catalyses the reaction uridine(54) in tRNA + (6R)-5,10-methylene-5,6,7,8-tetrahydrofolate + NADPH + H(+) = 5-methyluridine(54) in tRNA + (6S)-5,6,7,8-tetrahydrofolate + NADP(+). Its function is as follows. Catalyzes the folate-dependent formation of 5-methyl-uridine at position 54 (M-5-U54) in all tRNAs. The sequence is that of Methylenetetrahydrofolate--tRNA-(uracil-5-)-methyltransferase TrmFO from Prochlorococcus marinus (strain MIT 9303).